The chain runs to 92 residues: Small ribosomal subunit protein uS19c (92 aa).

The protein belongs to the universal ribosomal protein uS19 family.

The protein localises to the plastid. Its subcellular location is the chloroplast. Functionally, protein S19 forms a complex with S13 that binds strongly to the 16S ribosomal RNA. In Cucumis sativus (Cucumber), this protein is Small ribosomal subunit protein uS19c.